Consider the following 144-residue polypeptide: Large ribosomal subunit protein uL11 (144 aa).

It belongs to the universal ribosomal protein uL11 family. Part of the ribosomal stalk of the 50S ribosomal subunit. Interacts with L10 and the large rRNA to form the base of the stalk. L10 forms an elongated spine to which L12 dimers bind in a sequential fashion forming a multimeric L10(L12)X complex. In terms of processing, one or more lysine residues are methylated.

Its function is as follows. Forms part of the ribosomal stalk which helps the ribosome interact with GTP-bound translation factors. This is Large ribosomal subunit protein uL11 from Rickettsia bellii (strain OSU 85-389).